A 365-amino-acid polypeptide reads, in one-letter code: D-alanine--D-alanine ligase (365 aa).

The region spanning 156 to 360 is the ATP-grasp domain; that stretch reads KKLMAAEGLP…YAQLLDNLIE (205 aa). 183–238 provides a ligand contact to ATP; that stretch reads KRELGLPVFVKPARGGSSIGISRVADWSEWDAALSLAREHDSKVIVEAEIVGVEVE. Mg(2+) contacts are provided by aspartate 315, glutamate 327, and asparagine 329.

Belongs to the D-alanine--D-alanine ligase family. Mg(2+) serves as cofactor. It depends on Mn(2+) as a cofactor.

Its subcellular location is the cytoplasm. It carries out the reaction 2 D-alanine + ATP = D-alanyl-D-alanine + ADP + phosphate + H(+). It participates in cell wall biogenesis; peptidoglycan biosynthesis. In terms of biological role, cell wall formation. This chain is D-alanine--D-alanine ligase, found in Corynebacterium diphtheriae (strain ATCC 700971 / NCTC 13129 / Biotype gravis).